We begin with the raw amino-acid sequence, 341 residues long: Mytilin-2 (341 aa).

A signal peptide spans Met1–Gly24.

As to expression, component of the organic matrix of calcified shell layers like nacre and prisms.

The protein resides in the secreted. The polypeptide is Mytilin-2 (Mytilus californianus (California mussel)).